We begin with the raw amino-acid sequence, 20 residues long: Hemoglobinase-like protein 1 (20 aa).

Belongs to the peptidase C13 family.

It catalyses the reaction Hydrolysis of proteins and small molecule substrates at -Asn-|-Xaa- bonds.. This chain is Hemoglobinase-like protein 1, found in Fasciola hepatica (Liver fluke).